A 200-amino-acid polypeptide reads, in one-letter code: Non-specific lipid transfer protein GPI-anchored 16 (200 aa).

The first 20 residues, methionine 1–glycine 20, serve as a signal peptide directing secretion. Disulfide bonds link cysteine 27/cysteine 72, cysteine 38/cysteine 56, cysteine 57/cysteine 98, and cysteine 70/cysteine 107. A glycan (N-linked (GlcNAc...) asparagine) is linked at asparagine 87. Residues serine 134–serine 182 are disordered. A compositionally biased stretch (low complexity) spans alanine 140–threonine 163. Threonine 177 is lipidated: GPI-anchor amidated threonine. The propeptide at glycine 178–leucine 200 is removed in mature form.

Belongs to the plant LTP family. Expressed in seedlings, preferentially in hypocotyls and roots. Also observed in siliques.

It is found in the cell membrane. Functionally, essential protein involved in female gametophyte development. Probable lipid transfer protein. The protein is Non-specific lipid transfer protein GPI-anchored 16 of Arabidopsis thaliana (Mouse-ear cress).